Here is a 186-residue protein sequence, read N- to C-terminus: uncharacterized protein (186 aa).

3 disordered regions span residues 17–47 (LSGESEEDLAEERENPALVGSETAEPTEETF), 77–105 (EDKLLPSEPCADHPLAARPPSQAAAAAEA), and 121–164 (QQAA…PVAG). Residues 90–105 (PLAARPPSQAAAAAEA) are compositionally biased toward low complexity. Positions 136–149 (PEPDPEPADEAAEE) are enriched in acidic residues.

This is an uncharacterized protein from Homo sapiens (Human).